A 307-amino-acid polypeptide reads, in one-letter code: Ribonuclease Z (307 aa).

The Zn(2+) site is built by histidine 63, histidine 65, aspartate 67, histidine 68, histidine 140, aspartate 211, and histidine 269. The Proton acceptor role is filled by aspartate 67.

The protein belongs to the RNase Z family. Homodimer. Requires Zn(2+) as cofactor.

The catalysed reaction is Endonucleolytic cleavage of RNA, removing extra 3' nucleotides from tRNA precursor, generating 3' termini of tRNAs. A 3'-hydroxy group is left at the tRNA terminus and a 5'-phosphoryl group is left at the trailer molecule.. In terms of biological role, zinc phosphodiesterase, which displays some tRNA 3'-processing endonuclease activity. Probably involved in tRNA maturation, by removing a 3'-trailer from precursor tRNA. The sequence is that of Ribonuclease Z from Bacillus subtilis (strain 168).